A 91-amino-acid chain; its full sequence is DNA-binding protein HU (91 aa).

Belongs to the bacterial histone-like protein family.

Functionally, histone-like DNA-binding protein which is capable of wrapping DNA to stabilize it, and thus to prevent its denaturation under extreme environmental conditions. Also seems to act as a fortuitous virulence factor in delayed sequelae by binding to heparan sulfate-proteoglycans in the extracellular matrix of target organs and acting as a nidus for in situ immune complex formation. This chain is DNA-binding protein HU (hup), found in Streptococcus downei (Streptococcus sobrinus).